The chain runs to 715 residues: Fatty acid oxidation complex subunit alpha (715 aa).

The enoyl-CoA hydratase/isomerase stretch occupies residues 1 to 190; the sequence is MIYQGKAITV…KVGAVDAVVA (190 aa). A substrate-binding site is contributed by aspartate 297. The segment at 312–715 is 3-hydroxyacyl-CoA dehydrogenase; it reads HDAKQAAVLG…MAKNGQRFFN (404 aa). Residues methionine 325, aspartate 344, 401–403, lysine 408, and serine 430 contribute to the NAD(+) site; that span reads VVE. The active-site For 3-hydroxyacyl-CoA dehydrogenase activity is histidine 451. Position 454 (asparagine 454) interacts with NAD(+). Asparagine 501 and tyrosine 660 together coordinate substrate.

In the N-terminal section; belongs to the enoyl-CoA hydratase/isomerase family. This sequence in the C-terminal section; belongs to the 3-hydroxyacyl-CoA dehydrogenase family. Heterotetramer of two alpha chains (FadB) and two beta chains (FadA).

It carries out the reaction a (3S)-3-hydroxyacyl-CoA + NAD(+) = a 3-oxoacyl-CoA + NADH + H(+). The enzyme catalyses a (3S)-3-hydroxyacyl-CoA = a (2E)-enoyl-CoA + H2O. The catalysed reaction is a 4-saturated-(3S)-3-hydroxyacyl-CoA = a (3E)-enoyl-CoA + H2O. It catalyses the reaction (3S)-3-hydroxybutanoyl-CoA = (3R)-3-hydroxybutanoyl-CoA. It carries out the reaction a (3Z)-enoyl-CoA = a 4-saturated (2E)-enoyl-CoA. The enzyme catalyses a (3E)-enoyl-CoA = a 4-saturated (2E)-enoyl-CoA. Its pathway is lipid metabolism; fatty acid beta-oxidation. Involved in the aerobic and anaerobic degradation of long-chain fatty acids via beta-oxidation cycle. Catalyzes the formation of 3-oxoacyl-CoA from enoyl-CoA via L-3-hydroxyacyl-CoA. It can also use D-3-hydroxyacyl-CoA and cis-3-enoyl-CoA as substrate. The sequence is that of Fatty acid oxidation complex subunit alpha from Ectopseudomonas oleovorans (Pseudomonas oleovorans).